The following is a 997-amino-acid chain: Disease resistance protein RML1A (997 aa).

The 165-residue stretch at 12–176 (WRYRVFTSFH…KIARDVSEKL (165 aa)) folds into the TIR domain. Glutamate 87 is a catalytic residue. An NB-ARC domain is found at 191–447 (EAHLRKIQSL…HIAIFFNYED (257 aa)). LRR repeat units lie at residues 194–218 (LRKI…GPAG), 534–557 (TSGI…RFLS), 600–623 (AENL…TQLL), 624–647 (TKLK…SNAT), 649–670 (LEML…IKNL), 671–693 (HKLD…NINL), 694–714 (ASLE…PAFS), 715–737 (TKIK…ITHC), 758–781 (PSSL…CIKD), and 783–808 (QRLD…SLRL).

It carries out the reaction NAD(+) + H2O = ADP-D-ribose + nicotinamide + H(+). TIR-NB-LRR receptor-like protein that confers resistance to the pathogen Leptosphaeria maculans (blackleg disease). The sequence is that of Disease resistance protein RML1A from Arabidopsis thaliana (Mouse-ear cress).